Here is a 152-residue protein sequence, read N- to C-terminus: Nucleoside diphosphate kinase (152 aa).

Positions 11, 59, 87, 93, 104, and 114 each coordinate ATP. Histidine 117 functions as the Pros-phosphohistidine intermediate in the catalytic mechanism.

This sequence belongs to the NDK family. As to quaternary structure, homotetramer. Mg(2+) serves as cofactor.

The protein resides in the cytoplasm. It catalyses the reaction a 2'-deoxyribonucleoside 5'-diphosphate + ATP = a 2'-deoxyribonucleoside 5'-triphosphate + ADP. It carries out the reaction a ribonucleoside 5'-diphosphate + ATP = a ribonucleoside 5'-triphosphate + ADP. In terms of biological role, major role in the synthesis of nucleoside triphosphates other than ATP. The ATP gamma phosphate is transferred to the NDP beta phosphate via a ping-pong mechanism, using a phosphorylated active-site intermediate. This chain is Nucleoside diphosphate kinase, found in Prochlorococcus marinus (strain MIT 9515).